Reading from the N-terminus, the 103-residue chain is Transcription factor S (103 aa).

Residues cysteine 4, cysteine 7, cysteine 20, cysteine 23, cysteine 64, cysteine 67, cysteine 92, and cysteine 95 each contribute to the Zn(2+) site. Residues 4–23 form a C4-type zinc finger; sequence CPKCKSLMIYQGDKLVCRKC. The TFIIS-type zinc-finger motif lies at 60-100; it reads TKAICPACGHNEAFWWLRQLRAADESEVRFFRCTKCGKTWR.

This sequence belongs to the archaeal RpoM/eukaryotic RPA12/RPB9/RPC11 RNA polymerase family.

Induces RNA cleavage activity in the RNA polymerase. In its presence, the cleavage activity of the RNA polymerase truncates the RNA back to position +15 in a stepwise manner by releasing mainly dinucleotides from the 3'-end of the nascent RNA. The truncated RNAs are able to continue elongation. Involved in transcriptional proofreading and fidelity. Misincorporation of nucleotides during elongation of transcription leads to arrested elongation complexes which are rescued by TFS-promoted removal of a dinucleotide from the 3'-end. TFS is able to induce a cleavage resynthesis cycle in stalled elongation complexes (resulting from the next missing nucleotide or a reduced incorporation rate of a wrong nucleotide) preventing misincorporation and enabling proofreading in a post-incorporation manner. Pausing of elongation complexes is the main determinant of TFS-induced RNA cleavage. The protein is Transcription factor S of Archaeoglobus fulgidus (strain ATCC 49558 / DSM 4304 / JCM 9628 / NBRC 100126 / VC-16).